We begin with the raw amino-acid sequence, 465 residues long: UDP-N-acetylmuramate--L-alanine ligase (465 aa).

112 to 118 (GTHGKTT) serves as a coordination point for ATP.

This sequence belongs to the MurCDEF family.

The protein localises to the cytoplasm. It carries out the reaction UDP-N-acetyl-alpha-D-muramate + L-alanine + ATP = UDP-N-acetyl-alpha-D-muramoyl-L-alanine + ADP + phosphate + H(+). It functions in the pathway cell wall biogenesis; peptidoglycan biosynthesis. In terms of biological role, cell wall formation. This is UDP-N-acetylmuramate--L-alanine ligase from Burkholderia ambifaria (strain ATCC BAA-244 / DSM 16087 / CCUG 44356 / LMG 19182 / AMMD) (Burkholderia cepacia (strain AMMD)).